Here is a 304-residue protein sequence, read N- to C-terminus: MSPRDDIPDLKGFDGDGEGSVQVHDSEDIGLDVGGARVFSVYGKGGIGKSTTSSNLSAAFSLLGKRVLQIGCDPKHDSTFTLTGRLQETVIDILKQVNFHPEELRPEDYVTEGFNGVMCVEAGGPPAGTGCGGYVVGQTVKLLKQHHLLEDTDVVVFDVLGDVVCGGFAAPLQHADRALIVTANDFDSIYAMNRIIAAVQAKSVNYKVRLAGCVANRSRETNEVDRYCEAANFKRIAHMPDLDSIRRSRLKKRTLFEMDDAEDVVMARAEYIRLAETLWRSTGEPGLTPEPLTDRHIFELLGFD.

Residues 46–51 and Lys75 each bind ATP; that span reads GIGKST. Residue Ser50 participates in Mg(2+) binding. 2 residues coordinate [4Fe-4S] cluster: Cys131 and Cys165. ATP is bound by residues 216 to 217 and 240 to 242; these read NR and PDL.

Belongs to the NifH/BchL/ChlL family. As to quaternary structure, homodimer. Protochlorophyllide reductase is composed of three subunits; BchL, BchN and BchB. The cofactor is [4Fe-4S] cluster.

The catalysed reaction is chlorophyllide a + oxidized 2[4Fe-4S]-[ferredoxin] + 2 ADP + 2 phosphate = protochlorophyllide a + reduced 2[4Fe-4S]-[ferredoxin] + 2 ATP + 2 H2O. It functions in the pathway porphyrin-containing compound metabolism; bacteriochlorophyll biosynthesis (light-independent). Functionally, component of the dark-operative protochlorophyllide reductase (DPOR) that uses Mg-ATP and reduced ferredoxin to reduce ring D of protochlorophyllide (Pchlide) to form chlorophyllide a (Chlide). This reaction is light-independent. The L component serves as a unique electron donor to the NB-component of the complex, and binds Mg-ATP. The chain is Light-independent protochlorophyllide reductase iron-sulfur ATP-binding protein from Rhodobacter capsulatus (strain ATCC BAA-309 / NBRC 16581 / SB1003).